The following is a 243-amino-acid chain: Probable intron-encoded endonuclease aI3 (243 aa).

The protein belongs to the LAGLIDADG endonuclease family.

The protein localises to the mitochondrion. Functionally, mitochondrial DNA endonuclease involved in intron homing. In Dictyostelium citrinum (Slime mold), this protein is Probable intron-encoded endonuclease aI3 (aI3).